Here is a 382-residue protein sequence, read N- to C-terminus: Sphingosine kinase 1 (382 aa).

The DAGKc domain occupies 12-159; the sequence is PRPCRVLVLL…MNLLSLHTAS (148 aa). ATP is bound by residues 22–24 and 54–58; these read NPQ and TERKN. 79–82 lines the substrate pocket; the sequence is SGDG. Asp81 functions as the Proton donor/acceptor in the catalytic mechanism. Residues Glu86 and 111–113 each bind ATP; that span reads GSG. 2 consecutive short sequence motifs (nuclear export signal) follow at residues 147 to 155 and 161 to 169; these read LSPMNLLSL and LRLYSVLSL. Asp178 provides a ligand contact to substrate. ATP is bound by residues Arg185 and Arg191. Residue Thr193 is modified to Phosphothreonine. Ser225 carries the phosphoserine modification. 340 to 342 contributes to the ATP binding site; sequence DGE.

In terms of assembly, interacts with ACY1. Binds to calmodulin. Interacts with SPHKAP. Interacts with CIB1, the interaction occurs in a calcium-dependent manner. Interacts with TRAF2. Interacts with EEF1A1; the interaction enhances SPHK1 kinase activity. It depends on Mg(2+) as a cofactor. As to expression, widely expressed. Expressed in brain (at protein level). Detected in neurons.

Its subcellular location is the cytoplasm. The protein localises to the endosome membrane. It localises to the nucleus. It is found in the cell membrane. The protein resides in the synapse. The enzyme catalyses a sphingoid base + ATP = a sphingoid 1-phosphate + ADP + H(+). It carries out the reaction L-seryl-[protein] + acetyl-CoA = O-acetyl-L-seryl-[protein] + CoA. The catalysed reaction is sphinganine + ATP = sphinganine 1-phosphate + ADP + H(+). It catalyses the reaction sphing-4-enine + ATP = sphing-4-enine 1-phosphate + ADP + H(+). The enzyme catalyses 1-O-hexadecyl-2-amino-sn-glycerol + ATP = 1-O-hexadecyl-2-desoxy-2-amino-sn-glycero-3-phosphate + ADP + H(+). Its activity is regulated as follows. Acetyltransferase activity increases in presence of the kinase substrate, sphingosine. In Purkinje cells, kinase activity on sphingosine increases in presence of VEGFA. In neurons, kinase activity increases during the first 24h in presence of Amyloid-beta protein 42 to decrease after 96h. Catalyzes the phosphorylation of sphingosine to form sphingosine 1-phosphate (SPP), a lipid mediator with both intra- and extracellular functions. Also acts on D-erythro-sphingosine and to a lesser extent sphinganine, but not other lipids, such as D,L-threo-dihydrosphingosine, N,N-dimethylsphingosine, diacylglycerol, ceramide, or phosphatidylinositol. In contrast to proapoptotic SPHK2, has a negative effect on intracellular ceramide levels, enhances cell growth and inhibits apoptosis. Involved in the regulation of inflammatory response and neuroinflammation. Via the product sphingosine 1-phosphate, stimulates TRAF2 E3 ubiquitin ligase activity, and promotes activation of NF-kappa-B in response to TNF signaling. In response to TNF and in parallel to NF-kappa-B activation, negatively regulates RANTES induction through p38 MAPK signaling pathway. Involved in endocytic membrane trafficking induced by sphingosine, recruited to dilate endosomes, also plays a role on later stages of endosomal maturation and membrane fusion independently of its kinase activity. In Purkinje cells, seems to be also involved in the regulation of autophagosome-lysosome fusion upon VEGFA. Its function is as follows. Has serine acetyltransferase activity on PTGS2/COX2 in an acetyl-CoA dependent manner. The acetyltransferase activity increases in presence of the kinase substrate, sphingosine. During neuroinflammation, through PTGS2 acetylation, promotes neuronal secretion of specialized preresolving mediators (SPMs), especially 15-R-lipoxin A4, which results in an increase of phagocytic microglia. The chain is Sphingosine kinase 1 from Mus musculus (Mouse).